The primary structure comprises 178 residues: ATP synthase subunit delta (178 aa).

It belongs to the ATPase delta chain family. F-type ATPases have 2 components, F(1) - the catalytic core - and F(0) - the membrane proton channel. F(1) has five subunits: alpha(3), beta(3), gamma(1), delta(1), epsilon(1). F(0) has three main subunits: a(1), b(2) and c(10-14). The alpha and beta chains form an alternating ring which encloses part of the gamma chain. F(1) is attached to F(0) by a central stalk formed by the gamma and epsilon chains, while a peripheral stalk is formed by the delta and b chains.

The protein localises to the cell membrane. In terms of biological role, f(1)F(0) ATP synthase produces ATP from ADP in the presence of a proton or sodium gradient. F-type ATPases consist of two structural domains, F(1) containing the extramembraneous catalytic core and F(0) containing the membrane proton channel, linked together by a central stalk and a peripheral stalk. During catalysis, ATP synthesis in the catalytic domain of F(1) is coupled via a rotary mechanism of the central stalk subunits to proton translocation. This protein is part of the stalk that links CF(0) to CF(1). It either transmits conformational changes from CF(0) to CF(1) or is implicated in proton conduction. The protein is ATP synthase subunit delta of Streptococcus pyogenes serotype M2 (strain MGAS10270).